Here is a 407-residue protein sequence, read N- to C-terminus: MGIIVQKFGGTSVGSIERIQHVANRVIEEVQKGNDVVVVVSAMGKTTDELVNLAKQISNHPSKREMDMLLSTGEQVSIALLAMSLHEKGYKAVSLTGWQAGITTEEMHGNARIMNIDTTRIRRCLDEGAIVIVAGFQGVTETGEITTLGRGGSDTTAVALAAALKAEKCDIYTDVTGVFTTDPRYVKTARKIKEISYDEMLELANLGAGVLHPRAVEFAKNYEVPLEVRSSMENERGTMVKEEVSMEQHLIVRGIAFEDQVTRVTVVGIEKYLQSVATIFTALANRGINVDIIIQNATNSETASVSFSIRTEDLPETLQVLQALEGADVHYESGLAKVSIVGSGMISNPGVAARVFEVLADQGIEIKMVSISEIKISTVIDEKYMVSAVEELHEAFGLAEEAAAVRS.

Position 7–10 (7–10 (KFGG)) interacts with ATP. 25-30 (RVIEEV) lines the substrate pocket. Serine 41 is a binding site for ATP. Residues 47-49 (TDE), glutamate 74, 125-126 (LD), 150-153 (RGGS), and serine 153 contribute to the substrate site. ATP is bound by residues 173–174 (TD) and 179–184 (FTTDPR). 2 ACT domains span residues 264-338 (VTVV…LAKV) and 340-407 (IVGS…AVRS). Substrate-binding positions include 289 to 291 (NVD), glutamine 295, 351 to 352 (VA), 365 to 366 (EI), and 372 to 373 (SE).

This sequence belongs to the aspartokinase family. Tetramer consisting of 2 isoforms Alpha (catalytic and regulation) and of a homodimer of 2 isoforms Beta (regulation).

The enzyme catalyses L-aspartate + ATP = 4-phospho-L-aspartate + ADP. It functions in the pathway amino-acid biosynthesis; L-lysine biosynthesis via DAP pathway; (S)-tetrahydrodipicolinate from L-aspartate: step 1/4. Its pathway is amino-acid biosynthesis; L-methionine biosynthesis via de novo pathway; L-homoserine from L-aspartate: step 1/3. It participates in amino-acid biosynthesis; L-threonine biosynthesis; L-threonine from L-aspartate: step 1/5. With respect to regulation, lysine-sensitive. In terms of biological role, catalyzes the phosphorylation of the beta-carboxyl group of aspartic acid with ATP to yield 4-phospho-L-aspartate, which is involved in the branched biosynthetic pathway leading to the biosynthesis of amino acids threonine, isoleucine and methionine. This chain is Aspartokinase (lysC), found in Geobacillus stearothermophilus (Bacillus stearothermophilus).